We begin with the raw amino-acid sequence, 400 residues long: Probable peptidoglycan glycosyltransferase FtsW (400 aa).

Over 1–24 (MSTGSLPLGLPSRDSLDGLRNSVD) the chain is Cytoplasmic. The helical transmembrane segment at 25-45 (LPLLAAAALLLGLGLIMVASA) threads the bilayer. At 46–63 (SMDLGERYYGNTWHFFQR) the chain is on the periplasmic side. A helical transmembrane segment spans residues 64–84 (QVLFAAIGLALATVMWAIPLE). Topologically, residues 85-88 (RWER) are cytoplasmic. The chain crosses the membrane as a helical span at residues 89 to 109 (AGPWLLILVMVLLIAVLLPGV). Residues 110–118 (GRTVNGATR) are Periplasmic-facing. A helical transmembrane segment spans residues 119–139 (WIPIGMFNLQVAEPVKLLVVM). Topologically, residues 140 to 153 (YLAGYIVRHYSALR) are cytoplasmic. The helical transmembrane segment at 154–174 (LHLRGFVRPLVVLGFGTVLLL) threads the bilayer. Residues 175-177 (LQP) are Periplasmic-facing. Residues 178–198 (DFGGAAIMLAIGMGMLFLAGA) traverse the membrane as a helical segment. Residue lysine 199 is a topological domain, cytoplasmic. A helical membrane pass occupies residues 200-220 (LWQFAALGATIAVGMAFVAVA). The Periplasmic segment spans residues 221 to 278 (APYRVARLTAFLDPWQDPFATGFQLTQSLIAIGSGGWFGTGLGNSVQKLFYLPEAHND). The helical transmembrane segment at 279–299 (FLFAVFAEEFGFIGVLALIAL) threads the bilayer. The Cytoplasmic segment spans residues 300–324 (FAVVVWRCVKIGLWAERAGHAFGSH). Residues 325 to 345 (LAFGVAIWLALQSALNLAVNM) form a helical membrane-spanning segment. At 346 to 354 (GLLPTKGMT) the chain is on the periplasmic side. Residues 355 to 375 (LPFLSYGGSSLIVTLMAIGLV) form a helical membrane-spanning segment. Topologically, residues 376–400 (MRVYREAQIPAPRQSTPPRRKRGQA) are cytoplasmic.

Belongs to the SEDS family. FtsW subfamily.

It is found in the cell inner membrane. The catalysed reaction is [GlcNAc-(1-&gt;4)-Mur2Ac(oyl-L-Ala-gamma-D-Glu-L-Lys-D-Ala-D-Ala)](n)-di-trans,octa-cis-undecaprenyl diphosphate + beta-D-GlcNAc-(1-&gt;4)-Mur2Ac(oyl-L-Ala-gamma-D-Glu-L-Lys-D-Ala-D-Ala)-di-trans,octa-cis-undecaprenyl diphosphate = [GlcNAc-(1-&gt;4)-Mur2Ac(oyl-L-Ala-gamma-D-Glu-L-Lys-D-Ala-D-Ala)](n+1)-di-trans,octa-cis-undecaprenyl diphosphate + di-trans,octa-cis-undecaprenyl diphosphate + H(+). The protein operates within cell wall biogenesis; peptidoglycan biosynthesis. In terms of biological role, peptidoglycan polymerase that is essential for cell division. In Thioalkalivibrio sp. (strain K90mix), this protein is Probable peptidoglycan glycosyltransferase FtsW.